We begin with the raw amino-acid sequence, 429 residues long: Queuine tRNA-ribosyltransferase accessory subunit 2 (429 aa).

Positions 330, 332, 335, and 361 each coordinate Zn(2+).

Belongs to the queuine tRNA-ribosyltransferase family. QTRT2 subfamily. In terms of assembly, heterodimer of a catalytic subunit and an accessory subunit. It depends on Zn(2+) as a cofactor.

It is found in the cytoplasm. Functionally, non-catalytic subunit of the queuine tRNA-ribosyltransferase (TGT) that catalyzes the base-exchange of a guanine (G) residue with queuine (Q) at position 34 (anticodon wobble position) in tRNAs with GU(N) anticodons (tRNA-Asp, -Asn, -His and -Tyr), resulting in the hypermodified nucleoside queuosine (7-(((4,5-cis-dihydroxy-2-cyclopenten-1-yl)amino)methyl)-7-deazaguanosine). The protein is Queuine tRNA-ribosyltransferase accessory subunit 2 of Culex quinquefasciatus (Southern house mosquito).